A 350-amino-acid polypeptide reads, in one-letter code: Aldo-keto reductase 1B (350 aa).

Tyr-84 serves as the catalytic Proton donor. Position 146 (His-146) interacts with substrate. NADP(+) is bound at residue 244-306; it reads SPLGSPNRPW…SVTKDRIESN (63 aa).

The protein belongs to the aldo/keto reductase family.

Its subcellular location is the cytoplasm. It catalyses the reaction an alditol + NADP(+) = an aldose + NADPH + H(+). The catalysed reaction is all-trans-retinol + NADP(+) = all-trans-retinal + NADPH + H(+). It carries out the reaction 9-cis-retinol + NADP(+) = 9-cis-retinal + NADPH + H(+). The enzyme catalyses 13-cis-retinol + NADP(+) = 13-cis-retinal + NADPH + H(+). It catalyses the reaction glycerol + NADP(+) = D-glyceraldehyde + NADPH + H(+). The catalysed reaction is glycerol + NADP(+) = L-glyceraldehyde + NADPH + H(+). It carries out the reaction prenol + NADP(+) = 3-methyl-2-butenal + NADPH + H(+). The enzyme catalyses (E)-hex-2-en-1-ol + NADP(+) = (E)-hex-2-enal + NADPH + H(+). It catalyses the reaction (E,E)-2,4-hexadien-1-ol + NADP(+) = (E,E)-2,4-hexadienal + NADPH + H(+). The catalysed reaction is a 4-hydroxynonen-1-ol + NADP(+) = a 4-hydroxynonenal + NADPH + H(+). It carries out the reaction prostaglandin F2alpha + NADP(+) = prostaglandin H2 + NADPH + H(+). The enzyme catalyses allyl alcohol + NADP(+) = acrolein + NADPH + H(+). It catalyses the reaction pyridine 3-methanol + NADP(+) = pyridine-3-carbaldehyde + NADPH + H(+). The catalysed reaction is 1-hexadecanoyl-2-(5-oxopentanoyl)-sn-glycero-3-phosphocholine + NADPH + H(+) = 1-hexadecanoyl-2-(5-hydroxypentanoyl)-sn-glycero-3-phosphocholine + NADP(+). It carries out the reaction 1-hexadecanoyl-2-(7-oxoheptanoyl)-sn-glycero-3-phosphocholine + NADPH + H(+) = 1-hexadecanoyl-2-(7-hydroxyheptanoyl)-sn-glycero-3-phosphocholine + NADP(+). The enzyme catalyses 1-hexadecanoyl-2-(9-oxononanoyl)-sn-glycero-3-phosphocholine + NADPH + H(+) = 1-hexadecanoyl-2-(9-hydroxynonanoyl)-sn-glycero-3-phosphocholine + NADP(+). It catalyses the reaction 1-hexadecanoyl-2-(5-oxopentanoyl)-sn-glycero-3-phosphoethanolamine + NADPH + H(+) = 1-hexadecanoyl-2-(5-hydroxypentanoyl)-sn-glycero-3-phosphoethanolamine + NADP(+). Functionally, catalyzes the NADPH-dependent reduction of a wide variety of carbonyl-containing compounds to their corresponding alcohols. Displays enzymatic activity towards endogenous metabolites such as aromatic and aliphatic aldehydes, ketones, monosaccharides, bile acids and xenobiotics substrates. Key enzyme in the polyol pathway, catalyzes reduction of glucose to sorbitol during hyperglycemia. Reduces steroids and their derivatives and prostaglandins. Through production of prostaglandin F2alpha may regulate the activity of non-muscle myosin II in an autocrine or paracrine fashion; influences border cell and nurse cell stiffness to facilitate border cell cluster migration. Also regulates the cell surface localization of integrins in an autocrine or paracrine fashion; influences border cell adhesion to maintain border cell cluster morphology. In hemocytes, probably contributes to production of sugar alcohols in the hemolymph, which act as alarmins involved in gut-fat body innate immunological communication (GFIC); leads to activation of the imd/Relish signaling pathway in the fat body. The protein is Aldo-keto reductase 1B of Drosophila melanogaster (Fruit fly).